A 274-amino-acid chain; its full sequence is Protein STAY-GREEN, chloroplastic (274 aa).

Residues 1 to 48 constitute a chloroplast transit peptide; sequence MAAATSTMSLIPPITQQQRWHAADSLVVLASRRHDSRRRRRCRYVVPR.

This sequence belongs to the staygreen family.

The protein resides in the plastid. The protein localises to the chloroplast. Involved in the disassembling mechanism of the intact light-harvesting complex of photosystem II (LHCPII) in the thylakoid membranes. Required to trigger chlorophyll degradation during natural and dark-induced leaf senescence. In Oryza sativa subsp. indica (Rice), this protein is Protein STAY-GREEN, chloroplastic (SGR).